The sequence spans 307 residues: MTVAPEGRKLLRLEVRNADTPIERKPPWIRVRARMGPEYTELKSLVRREGLHTVCEEAGCPNIFECWEDREATFLIGGDQCTRRCDFCQIDTGKPAELDRDEPRRVADSVRTMGLRYATVTGVARDDLPDGGAWLYAETVRAIKELNPSTGVELLIPDFNGRPDRLAEVFGSRPEVLAHNVETVPRIFKRIRPAFTYRRSLDVLTAAREAGLVTKSNLILGLGETPDEVRTALADLRGAGCDIITITQYLRPSARHHPVERWVKPEEFVEFARHAEELGFSGVLAGPLVRSSYRAGRLYRQAARARA.

[4Fe-4S] cluster contacts are provided by Cys55, Cys60, Cys66, Cys81, Cys85, Cys88, and Ser292. In terms of domain architecture, Radical SAM core spans 67-281 (WEDREATFLI…ARHAEELGFS (215 aa)).

The protein belongs to the radical SAM superfamily. Lipoyl synthase family. It depends on [4Fe-4S] cluster as a cofactor.

The protein localises to the cytoplasm. It carries out the reaction [[Fe-S] cluster scaffold protein carrying a second [4Fe-4S](2+) cluster] + N(6)-octanoyl-L-lysyl-[protein] + 2 oxidized [2Fe-2S]-[ferredoxin] + 2 S-adenosyl-L-methionine + 4 H(+) = [[Fe-S] cluster scaffold protein] + N(6)-[(R)-dihydrolipoyl]-L-lysyl-[protein] + 4 Fe(3+) + 2 hydrogen sulfide + 2 5'-deoxyadenosine + 2 L-methionine + 2 reduced [2Fe-2S]-[ferredoxin]. Its pathway is protein modification; protein lipoylation via endogenous pathway; protein N(6)-(lipoyl)lysine from octanoyl-[acyl-carrier-protein]: step 2/2. Functionally, catalyzes the radical-mediated insertion of two sulfur atoms into the C-6 and C-8 positions of the octanoyl moiety bound to the lipoyl domains of lipoate-dependent enzymes, thereby converting the octanoylated domains into lipoylated derivatives. The sequence is that of Lipoyl synthase from Mycobacterium avium (strain 104).